A 473-amino-acid chain; its full sequence is Glutamate--tRNA ligase (473 aa).

Residues 9–19 carry the 'HIGH' region motif; that stretch reads PSPTGYLHVGG. Positions 98, 100, 125, and 127 each coordinate Zn(2+). The short motif at 237–241 is the 'KMSKS' region element; it reads KLSKR. ATP is bound at residue Lys240.

Belongs to the class-I aminoacyl-tRNA synthetase family. Glutamate--tRNA ligase type 1 subfamily. In terms of assembly, monomer. Zn(2+) is required as a cofactor.

The protein localises to the cytoplasm. The enzyme catalyses tRNA(Glu) + L-glutamate + ATP = L-glutamyl-tRNA(Glu) + AMP + diphosphate. Catalyzes the attachment of glutamate to tRNA(Glu) in a two-step reaction: glutamate is first activated by ATP to form Glu-AMP and then transferred to the acceptor end of tRNA(Glu). The chain is Glutamate--tRNA ligase from Sodalis glossinidius (strain morsitans).